Consider the following 185-residue polypeptide: ATP-dependent protease subunit HslV (185 aa).

T2 is a catalytic residue. Na(+) is bound by residues G157, C160, and T163.

The protein belongs to the peptidase T1B family. HslV subfamily. As to quaternary structure, a double ring-shaped homohexamer of HslV is capped on each side by a ring-shaped HslU homohexamer. The assembly of the HslU/HslV complex is dependent on binding of ATP.

The protein resides in the cytoplasm. It catalyses the reaction ATP-dependent cleavage of peptide bonds with broad specificity.. Its activity is regulated as follows. Allosterically activated by HslU binding. In terms of biological role, protease subunit of a proteasome-like degradation complex believed to be a general protein degrading machinery. This chain is ATP-dependent protease subunit HslV, found in Idiomarina loihiensis (strain ATCC BAA-735 / DSM 15497 / L2-TR).